Here is a 135-residue protein sequence, read N- to C-terminus: Large ribosomal subunit protein eL32 (135 aa).

It belongs to the eukaryotic ribosomal protein eL32 family. As to quaternary structure, component of the large ribosomal subunit.

The protein resides in the cytoplasm. Component of the large ribosomal subunit. The ribosome is a large ribonucleoprotein complex responsible for the synthesis of proteins in the cell. The chain is Large ribosomal subunit protein eL32 (rpl32) from Ictalurus punctatus (Channel catfish).